Consider the following 143-residue polypeptide: Large ribosomal subunit protein uL11 (143 aa).

The protein belongs to the universal ribosomal protein uL11 family. In terms of assembly, part of the ribosomal stalk of the 50S ribosomal subunit. Interacts with L10 and the large rRNA to form the base of the stalk. L10 forms an elongated spine to which L12 dimers bind in a sequential fashion forming a multimeric L10(L12)X complex. Post-translationally, one or more lysine residues are methylated.

Forms part of the ribosomal stalk which helps the ribosome interact with GTP-bound translation factors. The polypeptide is Large ribosomal subunit protein uL11 (Bifidobacterium longum subsp. infantis (strain ATCC 15697 / DSM 20088 / JCM 1222 / NCTC 11817 / S12)).